The chain runs to 271 residues: Putative pirin-like protein At3g59260 (271 aa).

Belongs to the pirin family.

Its subcellular location is the nucleus. The polypeptide is Putative pirin-like protein At3g59260 (Arabidopsis thaliana (Mouse-ear cress)).